Here is a 36-residue protein sequence, read N- to C-terminus: Zinc metalloproteinase-disintegrin-like VaH1 (36 aa).

The Peptidase M12B domain occupies 1-36 (MVTKYSSIFMSPILSNPPILYFSDCSREXYQKXLTN).

Belongs to the venom metalloproteinase (M12B) family. P-III subfamily. P-IIIa sub-subfamily. In terms of assembly, monomer. Zn(2+) is required as a cofactor. In terms of processing, the N-terminus is blocked. Post-translationally, glycosylated. Expressed by the venom gland.

The protein localises to the secreted. With respect to regulation, inhibited by EDTA, but not inhibited by iodoacetamide, PMSF and pepstatin A. Its function is as follows. Snake venom zinc metalloprotease that exhibits strong hemorrhagic activity. It also degrades alpha-chain of fibrinogen (FGA), but not the beta- and the gamma-chains. Possesses potent azocaseinolytic activity and cleaves insulin B-chain, hydrolyzing it at positions Ala(14)-Leu(15), followed by Tyr(16)-Leu(17) and His(10)-Leu(11). In vivo, subcutaneous injection into mice induces strong hemorrhage. This is Zinc metalloproteinase-disintegrin-like VaH1 from Vipera ammodytes ammodytes (Western sand viper).